The following is a 402-amino-acid chain: Secondary metabolism regulator laeA (402 aa).

The disordered stretch occupies residues 1–70 (MSLKYYLNDL…MSPTEVCSTD (70 aa)). Acidic residues predominate over residues 11-21 (SDSDSESESEC).

The protein belongs to the methyltransferase superfamily. LaeA methyltransferase family.

The protein localises to the nucleus. It carries out the reaction L-methionyl-[protein] + S-adenosyl-L-methionine = S-methyl-L-methionyl-[protein] + S-adenosyl-L-homocysteine. Methyltransferase that performs automethylation. No other methyl-accepting substrate has been identified yet. Acts as a global regulator for secondary metabolite gene expression. Negatively regulates the production of coprinoferrin, a structurally novel acylated tripeptide hydroxamate siderophore. This is Secondary metabolism regulator laeA from Coprinopsis cinerea (strain Okayama-7 / 130 / ATCC MYA-4618 / FGSC 9003) (Inky cap fungus).